The chain runs to 325 residues: Zinc finger C2HC domain-containing protein 1A (325 aa).

The segment at 15–44 adopts a C2HC/C3H-type 1 zinc-finger fold; sequence ELLPCKICGRTFFPVALKKHGPICQKTATK. 4 residues coordinate Zn(2+): Cys19, Cys22, His34, and Cys38. Residues 43–83 are disordered; that stretch reads TKKRKTFDSSRQRAEGTDIPTVKPLKPRPEPPKKPSNWRRK. A compositionally biased stretch (basic and acidic residues) spans 48–58; that stretch reads TFDSSRQRAEG. A C2HC/C3H-type 2 zinc finger spans residues 118 to 147; the sequence is DYIQCPYCQRRFNENAADRHINFCKEQAAR. Zn(2+) is bound by residues Cys122, Cys125, His137, and Cys141. The interval 150 to 260 is disordered; the sequence is NKGKFSTDTK…NPAPGVLTNK (111 aa). Low complexity-rich tracts occupy residues 177 to 188 and 197 to 216; these read SNSPGTASSGSS and GKTV…SSLG. Residue Ser223 is modified to Phosphoserine. Position 244 is a phosphothreonine (Thr244). The residue at position 292 (Ser292) is a Phosphoserine.

This sequence belongs to the ZC2HC1 family. It depends on Zn(2+) as a cofactor.

The chain is Zinc finger C2HC domain-containing protein 1A (ZC2HC1A) from Homo sapiens (Human).